Here is a 453-residue protein sequence, read N- to C-terminus: Serine/threonine-protein phosphatase 2A 55 kDa regulatory subunit B delta isoform (453 aa).

4 WD repeats span residues 32–71 (AEADIISTVEFNYSGDLLATGDKGGRVVIFQREQENKGRA), 97–138 (EIEE…KRAE), 181–219 (AHTYHINSISVNSDHETYLSADDLRINLWHLEITDRSFN), and 230–270 (ELTE…LCDR). S285 bears the Phosphoserine mark. WD repeat units follow at residues 289–327 (EIISSISDVKFSHSGRYMMTRDYLSVKVWDLNMEGRPVE), 344–385 (ENDC…DVTL), and 420–452 (DFNKKILHTAWHPMESIIAVAATNNLYIFQDKI). Y305 is subject to Phosphotyrosine. The residue at position 308 (T308) is a Phosphothreonine. A disordered region spans residues 385–406 (LEASRENSKPRASLKPRKVCSG).

Belongs to the phosphatase 2A regulatory subunit B family. As to quaternary structure, PP2A consists of a common heterodimeric core enzyme, composed of a 36 kDa catalytic subunit (subunit C) and a 65 kDa constant regulatory subunit (PR65 or subunit A), that associates with a variety of regulatory subunits. Proteins that associate with the core dimer include three families of regulatory subunits B (the R2/B/PR55/B55, R3/B''/PR72/PR130/PR59 and R5/B'/B56 families), the 48 kDa variable regulatory subunit, viral proteins, and cell signaling molecules. Interacts with ENSA (when phosphorylated at 'Ser-67') and ARPP19 (when phosphorylated at 'Ser-62'), leading to inhibit PP2A activity. Interacts with IER5. In terms of tissue distribution, widely expressed with high levels in brain, heart, placenta, skeletal muscle, testis, thymus and spleen.

It is found in the cytoplasm. In terms of biological role, substrate-recognition subunit of protein phosphatase 2A (PP2A) that plays a key role in cell cycle by controlling mitosis entry and exit. Involved in chromosome clustering during late mitosis by mediating dephosphorylation of MKI67. The activity of PP2A complexes containing PPP2R2D (PR55-delta) fluctuate during the cell cycle: the activity is high in interphase and low in mitosis. The protein is Serine/threonine-protein phosphatase 2A 55 kDa regulatory subunit B delta isoform (Ppp2r2d) of Rattus norvegicus (Rat).